Reading from the N-terminus, the 501-residue chain is ATP-dependent rRNA helicase RRP3 (501 aa).

Residues 3–44 (KIVKRKEKKANDELTSLAEKIRAKALENQKKLIEAEKEGGSE) adopt a coiled-coil conformation. A disordered region spans residues 36–79 (EAEKEGGSESDSEEDATAEKKKVLKSKSKSTVSTQNENTNEDES). Phosphoserine is present on residues S43, S45, and S47. Positions 81–109 (ESFSELNLVPELIQACKNLNYSKPTPIQS) match the Q motif motif. Positions 112–284 (IPPALEGHDI…RASLTNPVKC (173 aa)) constitute a Helicase ATP-binding domain. Position 125 to 132 (125 to 132 (AQTGSGKT)) interacts with ATP. Positions 231 to 234 (DEAD) match the DEAD box motif. The Helicase C-terminal domain occupies 307–461 (LKNTYLIYLL…NIILTLRDSV (155 aa)). Residues 480-501 (IARGKGRRGRMMTRENMDMGER) are disordered. The span at 491-501 (MTRENMDMGER) shows a compositional bias: basic and acidic residues.

It belongs to the DEAD box helicase family. DDX47/RRP3 subfamily. Interacts with the SSU processome.

Its subcellular location is the nucleus. It catalyses the reaction ATP + H2O = ADP + phosphate + H(+). ATPase activity is stimulated upon the addition of RNA. Functionally, ATP-dependent rRNA helicase required for pre-ribosomal RNA processing. Involved in the maturation of the 35S-pre-rRNA and to its cleavage to mature 18S rRNA. This chain is ATP-dependent rRNA helicase RRP3, found in Saccharomyces cerevisiae (strain ATCC 204508 / S288c) (Baker's yeast).